The following is a 212-amino-acid chain: Peroxisomal membrane protein 4 (212 aa).

2 consecutive transmembrane segments (helical) span residues 97 to 117 (GETHQMHSFLAAFIGGLLLFG) and 153 to 173 (WDPFPLHTAVIWGLVLWLFEY). A glycan (N-linked (GlcNAc...) asparagine) is linked at N206.

It belongs to the peroxisomal membrane protein PXMP2/4 family. Interacts with PEX19.

The protein resides in the peroxisome membrane. The sequence is that of Peroxisomal membrane protein 4 (Pxmp4) from Mus musculus (Mouse).